Reading from the N-terminus, the 219-residue chain is Glutathione S-transferase 3 (219 aa).

In terms of domain architecture, GST N-terminal spans 3-82 (DEVVLLDTWA…YIDEVWNDKS (80 aa)). Glutathione is bound by residues serine 13, isoleucine 54, and 66–67 (ES). The region spanning 88–216 (DPYKRSQARF…GLIVELQKTL (129 aa)) is the GST C-terminal domain.

It belongs to the GST superfamily. HSP26 family. In terms of assembly, homodimer. degradation; (R)-lactate from methylglyoxal: step 1/2.

It carries out the reaction RX + glutathione = an S-substituted glutathione + a halide anion + H(+). In terms of biological role, conjugation of reduced glutathione to a wide number of exogenous and endogenous hydrophobic electrophiles. Involved in the detoxification of certain herbicides. The protein is Glutathione S-transferase 3 (GST3) of Glycine max (Soybean).